Here is an 82-residue protein sequence, read N- to C-terminus: Cytochrome b559 subunit alpha (82 aa).

The helical transmembrane segment at 22–36 threads the bilayer; that stretch reads VIHSITIPALFIAGW. Residue His24 participates in heme binding.

The protein belongs to the PsbE/PsbF family. Heterodimer of an alpha subunit and a beta subunit. PSII is composed of 1 copy each of membrane proteins PsbA, PsbB, PsbC, PsbD, PsbE, PsbF, PsbH, PsbI, PsbJ, PsbK, PsbL, PsbM, PsbT, PsbX, PsbY, PsbZ, Psb30/Ycf12, peripheral proteins PsbO, CyanoQ (PsbQ), PsbU, PsbV and a large number of cofactors. It forms dimeric complexes. Heme b is required as a cofactor.

The protein localises to the cellular thylakoid membrane. Functionally, this b-type cytochrome is tightly associated with the reaction center of photosystem II (PSII). PSII is a light-driven water:plastoquinone oxidoreductase that uses light energy to abstract electrons from H(2)O, generating O(2) and a proton gradient subsequently used for ATP formation. It consists of a core antenna complex that captures photons, and an electron transfer chain that converts photonic excitation into a charge separation. The sequence is that of Cytochrome b559 subunit alpha from Trichodesmium erythraeum (strain IMS101).